A 103-amino-acid chain; its full sequence is Small ribosomal subunit protein uS10 (103 aa).

It belongs to the universal ribosomal protein uS10 family. As to quaternary structure, part of the 30S ribosomal subunit.

In terms of biological role, involved in the binding of tRNA to the ribosomes. In Thioalkalivibrio sulfidiphilus (strain HL-EbGR7), this protein is Small ribosomal subunit protein uS10.